Here is a 163-residue protein sequence, read N- to C-terminus: Phosphopantetheine adenylyltransferase (163 aa).

Position 11 (Ser-11) interacts with substrate. Residues 11-12 (SF) and His-19 each bind ATP. Residues Lys-43, Leu-75, and Arg-89 each contribute to the substrate site. ATP contacts are provided by residues 90 to 92 (GLR), Glu-100, and 125 to 131 (FGYLSSS).

This sequence belongs to the bacterial CoaD family. In terms of assembly, homohexamer. It depends on Mg(2+) as a cofactor.

The protein resides in the cytoplasm. The enzyme catalyses (R)-4'-phosphopantetheine + ATP + H(+) = 3'-dephospho-CoA + diphosphate. Its pathway is cofactor biosynthesis; coenzyme A biosynthesis; CoA from (R)-pantothenate: step 4/5. Reversibly transfers an adenylyl group from ATP to 4'-phosphopantetheine, yielding dephospho-CoA (dPCoA) and pyrophosphate. This is Phosphopantetheine adenylyltransferase from Geobacter metallireducens (strain ATCC 53774 / DSM 7210 / GS-15).